The sequence spans 529 residues: Bifunctional purine biosynthesis protein PurH (529 aa).

Residues 2–148 (QHLRPIRRAL…KNHKDVTIVV (147 aa)) enclose the MGS-like domain.

Belongs to the PurH family.

The enzyme catalyses (6R)-10-formyltetrahydrofolate + 5-amino-1-(5-phospho-beta-D-ribosyl)imidazole-4-carboxamide = 5-formamido-1-(5-phospho-D-ribosyl)imidazole-4-carboxamide + (6S)-5,6,7,8-tetrahydrofolate. The catalysed reaction is IMP + H2O = 5-formamido-1-(5-phospho-D-ribosyl)imidazole-4-carboxamide. The protein operates within purine metabolism; IMP biosynthesis via de novo pathway; 5-formamido-1-(5-phospho-D-ribosyl)imidazole-4-carboxamide from 5-amino-1-(5-phospho-D-ribosyl)imidazole-4-carboxamide (10-formyl THF route): step 1/1. It participates in purine metabolism; IMP biosynthesis via de novo pathway; IMP from 5-formamido-1-(5-phospho-D-ribosyl)imidazole-4-carboxamide: step 1/1. This Proteus mirabilis (strain HI4320) protein is Bifunctional purine biosynthesis protein PurH.